The sequence spans 165 residues: Destrin (165 aa).

At Ala-2 the chain carries N-acetylalanine. Ser-3 is subject to Phosphoserine. The 150-residue stretch at 4-153 folds into the ADF-H domain; sequence GVQVADEVCR…NRTSIAEKLG (150 aa). N6-acetyllysine is present on Lys-19. A Nuclear localization signal motif is present at residues 30 to 34; that stretch reads KKRKK.

The protein belongs to the actin-binding proteins ADF family. ISGylated.

Actin-depolymerizing protein. Severs actin filaments (F-actin) and binds to actin monomers (G-actin). Acts in a pH-independent manner. In Rattus norvegicus (Rat), this protein is Destrin (Dstn).